Consider the following 119-residue polypeptide: Flagellar transcriptional regulator FlhD (119 aa).

This sequence belongs to the FlhD family. Homodimer; disulfide-linked. Forms a heterohexamer composed of two FlhC and four FlhD subunits. Each FlhC binds a FlhD dimer, forming a heterotrimer, and a hexamer assembles by dimerization of two heterotrimers.

Its subcellular location is the cytoplasm. Functionally, functions in complex with FlhC as a master transcriptional regulator that regulates transcription of several flagellar and non-flagellar operons by binding to their promoter region. Activates expression of class 2 flagellar genes, including fliA, which is a flagellum-specific sigma factor that turns on the class 3 genes. Also regulates genes whose products function in a variety of physiological pathways. In Escherichia fergusonii (strain ATCC 35469 / DSM 13698 / CCUG 18766 / IAM 14443 / JCM 21226 / LMG 7866 / NBRC 102419 / NCTC 12128 / CDC 0568-73), this protein is Flagellar transcriptional regulator FlhD.